A 201-amino-acid polypeptide reads, in one-letter code: 3-isopropylmalate dehydratase small subunit (201 aa).

Belongs to the LeuD family. LeuD type 1 subfamily. In terms of assembly, heterodimer of LeuC and LeuD.

It carries out the reaction (2R,3S)-3-isopropylmalate = (2S)-2-isopropylmalate. It participates in amino-acid biosynthesis; L-leucine biosynthesis; L-leucine from 3-methyl-2-oxobutanoate: step 2/4. In terms of biological role, catalyzes the isomerization between 2-isopropylmalate and 3-isopropylmalate, via the formation of 2-isopropylmaleate. The chain is 3-isopropylmalate dehydratase small subunit from Klebsiella pneumoniae (strain 342).